A 397-amino-acid polypeptide reads, in one-letter code: Tryptophan synthase beta chain (397 aa).

The residue at position 87 (lysine 87) is an N6-(pyridoxal phosphate)lysine.

It belongs to the TrpB family. As to quaternary structure, tetramer of two alpha and two beta chains. Requires pyridoxal 5'-phosphate as cofactor.

The enzyme catalyses (1S,2R)-1-C-(indol-3-yl)glycerol 3-phosphate + L-serine = D-glyceraldehyde 3-phosphate + L-tryptophan + H2O. The protein operates within amino-acid biosynthesis; L-tryptophan biosynthesis; L-tryptophan from chorismate: step 5/5. Its function is as follows. The beta subunit is responsible for the synthesis of L-tryptophan from indole and L-serine. This is Tryptophan synthase beta chain from Salmonella choleraesuis (strain SC-B67).